A 230-amino-acid polypeptide reads, in one-letter code: V-type proton ATPase subunit E1 (230 aa).

Met1 is modified (N-acetylmethionine). Residues 8 to 67 (RQIQQMVRFIRQEAEEKANEISVSAEEEFNIEKLQLVEAEKKKIRQDYEKKEKQADVRKK) adopt a coiled-coil conformation. At Ser178 the chain carries Phosphoserine.

The protein belongs to the V-ATPase E subunit family. In terms of assembly, V-ATPase is a heteromultimeric enzyme composed of a peripheral catalytic V1 complex (components A to H) attached to an integral membrane V0 proton pore complex (components: a, c, c'', d and e).

It is found in the vacuole membrane. In terms of biological role, subunit of the peripheral V1 complex of vacuolar ATPase essential for assembly or catalytic function. V-ATPase is responsible for acidifying a variety of intracellular compartments in eukaryotic cells. Required for Golgi organization and vacuole function in embryogenesis. The sequence is that of V-type proton ATPase subunit E1 (VHA-E1) from Arabidopsis thaliana (Mouse-ear cress).